We begin with the raw amino-acid sequence, 629 residues long: Putrebactin synthase (629 aa).

Belongs to the IucA/IucC family. In terms of assembly, homodimer.

It catalyses the reaction 2 N-(3-carboxypropanoyl)-N-hydroxyputrescine + 2 ATP = putrebactin + 2 AMP + 2 diphosphate + 2 H(+). The enzyme catalyses 2 N-(3-carboxypropanoyl)-N-hydroxyputrescine + ATP = pre-putrebactin + AMP + diphosphate + H(+). The catalysed reaction is pre-putrebactin + ATP = putrebactin + AMP + diphosphate + H(+). The protein operates within siderophore biosynthesis. Its activity is regulated as follows. Requires Mg(2+) for activity. Its function is as follows. Ligase involved in the biosynthesis of the siderophore putrebactin. Catalyzes the ATP-dependent head-to-tail dimerization of N-hydroxy-N-succinyl-putrescine (HSP) to give pre-putrebactin and subsequent macrocyclization of pre-putrebactin to give putrebactin. The sequence is that of Putrebactin synthase from Shewanella sp. (strain MR-4).